The sequence spans 166 residues: Ubiquitin-conjugating enzyme E2-18 kDa (166 aa).

In terms of domain architecture, UBC core spans 5-165 (MALRRLMKEY…VRRLARKTLG (161 aa)). Residue C90 is the Glycyl thioester intermediate of the active site. A Glycyl cysteine thioester (Cys-Gly) (interchain with G-Cter in ubiquitin) cross-link involves residue C90.

It belongs to the ubiquitin-conjugating enzyme family. Post-translationally, autoubiquitinated at Cys-90; undergoes 'Lys-48'-linked polyubiquitination, which leads to proteasome-dependent protein degradation.

The enzyme catalyses S-ubiquitinyl-[E1 ubiquitin-activating enzyme]-L-cysteine + [E2 ubiquitin-conjugating enzyme]-L-cysteine = [E1 ubiquitin-activating enzyme]-L-cysteine + S-ubiquitinyl-[E2 ubiquitin-conjugating enzyme]-L-cysteine.. Its pathway is protein modification; protein ubiquitination. Its function is as follows. Catalyzes the covalent attachment of ubiquitin to other proteins. Functions in degradation of misfolded or regulated proteins localized in the endoplasmic reticulum (ER) lumen or membrane via the ubiquitin-proteasome system. Cognate E2 conjugating enzyme for the doa10 ubiquitin ligase complex, which is part of the ERAD-C pathway responsible for the rapid degradation of membrane proteins with misfolded cytoplasmic domains, and of the hrd1 ubiquitin ligase complex, which is part of the ERAD-L and ERAD-M pathways responsible for the rapid degradation of soluble lumenal and membrane proteins with misfolded lumenal domains (ERAD-L), or ER-membrane proteins with misfolded transmembrane domains (ERAD-M). Together with hrd1, required for the degradation of the transcription factor sre1 precursor in the absence of its binding partner scp1. Has a role in the formation of chromatin structures that influence the localization of transcriptional silencing factors. This Schizosaccharomyces pombe (strain 972 / ATCC 24843) (Fission yeast) protein is Ubiquitin-conjugating enzyme E2-18 kDa (ubc7).